We begin with the raw amino-acid sequence, 419 residues long: UDP-N-acetylglucosamine 1-carboxyvinyltransferase (419 aa).

A phosphoenolpyruvate-binding site is contributed by 22–23; the sequence is KN. Arg92 is a UDP-N-acetyl-alpha-D-glucosamine binding site. Residue Cys116 is the Proton donor of the active site. A 2-(S-cysteinyl)pyruvic acid O-phosphothioketal modification is found at Cys116. The UDP-N-acetyl-alpha-D-glucosamine site is built by Asp307 and Val329.

The protein belongs to the EPSP synthase family. MurA subfamily.

It localises to the cytoplasm. The enzyme catalyses phosphoenolpyruvate + UDP-N-acetyl-alpha-D-glucosamine = UDP-N-acetyl-3-O-(1-carboxyvinyl)-alpha-D-glucosamine + phosphate. Its pathway is cell wall biogenesis; peptidoglycan biosynthesis. Functionally, cell wall formation. Adds enolpyruvyl to UDP-N-acetylglucosamine. This is UDP-N-acetylglucosamine 1-carboxyvinyltransferase from Pseudothermotoga lettingae (strain ATCC BAA-301 / DSM 14385 / NBRC 107922 / TMO) (Thermotoga lettingae).